A 339-amino-acid polypeptide reads, in one-letter code: Uroporphyrinogen decarboxylase (339 aa).

Substrate contacts are provided by residues 21–25 (RQAGR), Phe-40, Asp-71, Tyr-147, Ser-202, and His-315.

Belongs to the uroporphyrinogen decarboxylase family. In terms of assembly, homodimer.

It localises to the cytoplasm. The catalysed reaction is uroporphyrinogen III + 4 H(+) = coproporphyrinogen III + 4 CO2. The protein operates within porphyrin-containing compound metabolism; protoporphyrin-IX biosynthesis; coproporphyrinogen-III from 5-aminolevulinate: step 4/4. Functionally, catalyzes the decarboxylation of four acetate groups of uroporphyrinogen-III to yield coproporphyrinogen-III. The chain is Uroporphyrinogen decarboxylase from Helicobacter pylori (strain J99 / ATCC 700824) (Campylobacter pylori J99).